A 150-amino-acid polypeptide reads, in one-letter code: D-aminoacyl-tRNA deacylase (150 aa).

The Gly-cisPro motif, important for rejection of L-amino acids signature appears at 138–139 (GP).

It belongs to the DTD family. As to quaternary structure, homodimer.

The protein resides in the cytoplasm. The enzyme catalyses glycyl-tRNA(Ala) + H2O = tRNA(Ala) + glycine + H(+). The catalysed reaction is a D-aminoacyl-tRNA + H2O = a tRNA + a D-alpha-amino acid + H(+). An aminoacyl-tRNA editing enzyme that deacylates mischarged D-aminoacyl-tRNAs. Also deacylates mischarged glycyl-tRNA(Ala), protecting cells against glycine mischarging by AlaRS. Acts via tRNA-based rather than protein-based catalysis; rejects L-amino acids rather than detecting D-amino acids in the active site. By recycling D-aminoacyl-tRNA to D-amino acids and free tRNA molecules, this enzyme counteracts the toxicity associated with the formation of D-aminoacyl-tRNA entities in vivo and helps enforce protein L-homochirality. This Bacteroides thetaiotaomicron (strain ATCC 29148 / DSM 2079 / JCM 5827 / CCUG 10774 / NCTC 10582 / VPI-5482 / E50) protein is D-aminoacyl-tRNA deacylase.